The sequence spans 129 residues: Thyroid hormone receptor alpha (129 aa).

Residues 26-129 (AEWELIRMVT…EIMSLRAAVR (104 aa)) enclose the NR LBD domain. Arg-91 is a 3,3',5-triiodo-L-thyronine binding site.

This sequence belongs to the nuclear hormone receptor family. NR1 subfamily.

Its subcellular location is the nucleus. Nuclear hormone receptor that can act as a repressor or activator of transcription. High affinity receptor for thyroid hormones, including triiodothyronine and thyroxine. This chain is Thyroid hormone receptor alpha (thra1), found in Sparus aurata (Gilthead sea bream).